A 369-amino-acid polypeptide reads, in one-letter code: MKRKAKTIIAGIVALAVSQGAMADDIKVAIVGAMSGPVAQWGDMEFNGARQAIKDINAKGGIKGDKLVGVEYDDACDPKQAVAVANKIVNDGIQYVIGHLCSSSTQPASDIYEDEGILMISPGATNPELTQRGYQYIMRTAGLDSSQGPTAAKYILETVKPQRIAIIHDKQQYGEGLARSVQDGLKQGNANIVFFDGITAGEKDFSALIARLQKENIDFVYYGGYYPEMGQMLRQARANGLKTQFMGPEGVGNASLSNIAGGAAEGMLVTMPKRYDQDPANKAIVEALKADKKDPSGPYVWITYAAVQSLATAMTRSASHAPLDLVKDLKANGADTVIGPLKWDEKGDLKGFEFGVFQWHADGSSTVAK.

Positions 1 to 23 are cleaved as a signal peptide; the sequence is MKRKAKTIIAGIVALAVSQGAMA. Cys76 and Cys101 are disulfide-bonded.

Belongs to the leucine-binding protein family.

It is found in the periplasm. In terms of biological role, this protein is a component of the leucine-specific transport system, which is one of the two periplasmic binding protein-dependent transport systems of the high-affinity transport of the branched-chain amino acids. This is Leucine-specific-binding protein (livK) from Salmonella typhi.